Reading from the N-terminus, the 475-residue chain is MIQIMNWFSMVIGLIPLNRQQSETNFILDYAMMCIVPIFYVACYLLINLSHIIGLCLLDSCNSVCKLSSHLFMHLGAFLYLTITLLSLYRRKEFFQQFDARLNDIDAVIQKCQRVAEMDKVKVTAVKHSVAYHFTWLFLFCVFTFALYYDVRSLYLTFGNLAFIPFMVSSFPYLAGSIIQGEFIYHVSVISQRFEQINMLLEKINQEARHRHAPLTVFDIESEGKKERKTVTPITVMDGRTTTGFGNENKFAGEMKRQEGQQKNDDDDLDTSNDEDEDDFDYDNATIAENTGNTSEANLPDLFKLHDKILALSVITNGEFGPQCVPYMAACFVVSIFGIFLETKVNFIVGGKSRLLDYMTYLYVIWSFTTMMVAYIVLRLCCNANNHSKQSAMIVHEIMQKKPAFMLSNDLFYNKMKSFTLQFLHWEGFFQFNGVGLFALDYTFIFSTVSAATSYLIVLLQFDMTAILRNEGLMS.

Over 1-34 (MIQIMNWFSMVIGLIPLNRQQSETNFILDYAMMC) the chain is Cytoplasmic. A helical transmembrane segment spans residues 35–55 (IVPIFYVACYLLINLSHIIGL). At 56-68 (CLLDSCNSVCKLS) the chain is on the extracellular side. A helical membrane pass occupies residues 69-89 (SHLFMHLGAFLYLTITLLSLY). Residues 90-128 (RRKEFFQQFDARLNDIDAVIQKCQRVAEMDKVKVTAVKH) lie on the Cytoplasmic side of the membrane. A helical membrane pass occupies residues 129-149 (SVAYHFTWLFLFCVFTFALYY). The Extracellular portion of the chain corresponds to 150-158 (DVRSLYLTF). Residues 159–179 (GNLAFIPFMVSSFPYLAGSII) traverse the membrane as a helical segment. The Cytoplasmic portion of the chain corresponds to 180 to 319 (QGEFIYHVSV…LALSVITNGE (140 aa)). A disordered region spans residues 243–281 (TGFGNENKFAGEMKRQEGQQKNDDDDLDTSNDEDEDDFD). A compositionally biased stretch (basic and acidic residues) spans 251-264 (FAGEMKRQEGQQKN). Positions 265 to 281 (DDDDLDTSNDEDEDDFD) are enriched in acidic residues. A helical transmembrane segment spans residues 320–340 (FGPQCVPYMAACFVVSIFGIF). The Extracellular segment spans residues 341-357 (LETKVNFIVGGKSRLLD). The chain crosses the membrane as a helical span at residues 358–378 (YMTYLYVIWSFTTMMVAYIVL). Residues 379-441 (RLCCNANNHS…FNGVGLFALD (63 aa)) are Cytoplasmic-facing. Residues 442-462 (YTFIFSTVSAATSYLIVLLQF) form a helical membrane-spanning segment. Residues 463-475 (DMTAILRNEGLMS) lie on the Extracellular side of the membrane.

It belongs to the insect chemoreceptor superfamily. Gustatory receptor (GR) family. Gr66a subfamily. Expressed widely in gustatory receptor neurons (GRNs) that respond to aversive chemicals. In larvae, is expressed in neurons of the terminal external chemosensory organ, and the dorsal, ventral and posterior external chemosensory organs.

The protein localises to the cell membrane. Functionally, gustatory receptor which mediates acceptance or avoidance behavior, depending on its substrates. Required for sensing all nonvolatile repulsive chemicals, including tastants, pheromones, and especially N,N-Diethyl-meta-toluamide (DEET), the most widely used insect repellent worldwide. Also functions as a pheromone receptor for a male inhibitory pheromone leading to male-male courtship suppression. The sequence is that of Gustatory and pheromone receptor 33a (Gr33a) from Drosophila melanogaster (Fruit fly).